The chain runs to 292 residues: 11-beta-hydroxysteroid dehydrogenase 1 (292 aa).

The chain crosses the membrane as a helical span at residues 7–24 (YLLPILGIFLAYYYYSAN).

Belongs to the short-chain dehydrogenases/reductases (SDR) family. Homodimer. As to expression, expressed highest in liver and ovaries (corpora lutea, granulosa cells, thecal, uterine caruncle and intercarunculer tissues), lower expression in kidney and spleen, and lowest in the adrenal.

It localises to the endoplasmic reticulum membrane. It carries out the reaction an 11beta-hydroxysteroid + NADP(+) = an 11-oxosteroid + NADPH + H(+). The catalysed reaction is corticosterone + NADP(+) = 11-dehydrocorticosterone + NADPH + H(+). It catalyses the reaction cortisone + NADPH + H(+) = cortisol + NADP(+). The enzyme catalyses a 7beta-hydroxysteroid + NADP(+) = a 7-oxosteroid + NADPH + H(+). It carries out the reaction 7-oxocholesterol + NADPH + H(+) = 7beta-hydroxycholesterol + NADP(+). The catalysed reaction is chenodeoxycholate + NADP(+) = 7-oxolithocholate + NADPH + H(+). It catalyses the reaction 7-oxolithocholate + NADPH + H(+) = ursodeoxycholate + NADP(+). The enzyme catalyses glycochenodeoxycholate + NADP(+) = 7-oxoglycolithocholate + NADPH + H(+). It carries out the reaction taurochenodeoxycholate + NADP(+) = 7-oxotaurolithocholate + NADPH + H(+). The catalysed reaction is tauroursodeoxycholate + NADP(+) = 7-oxotaurolithocholate + NADPH + H(+). It catalyses the reaction glycoursodeoxycholate + NADP(+) = 7-oxoglycolithocholate + NADPH + H(+). The enzyme catalyses 7-oxopregnenolone + NADPH + H(+) = 7beta-hydroxypregnenolone + NADP(+). It carries out the reaction 3beta,7alpha-dihydroxyandrost-5-en-17-one + NADP(+) = 3beta-hydroxy-5-androstene-7,17-dione + NADPH + H(+). The catalysed reaction is 3beta-hydroxy-5-androstene-7,17-dione + NADPH + H(+) = 3beta,7beta-dihydroxyandrost-5-en-17-one + NADP(+). It catalyses the reaction 3beta-hydroxy-5alpha-androstane-7,17-dione + NADPH + H(+) = 3beta,7beta-dihydroxy-5alpha-androstan-17-one + NADP(+). In terms of biological role, controls the reversible conversion of biologically active glucocorticoids such as cortisone to cortisol, and 11-dehydrocorticosterone to corticosterone in the presence of NADP(H). Participates in the corticosteroid receptor-mediated anti-inflammatory response, as well as metabolic and homeostatic processes. Plays a role in the secretion of aqueous humor in the eye, maintaining a normotensive, intraocular environment. Bidirectional in vitro, predominantly functions as a reductase in vivo, thereby increasing the concentration of active glucocorticoids. It has broad substrate specificity, besides glucocorticoids, it accepts other steroid and sterol substrates. Interconverts 7-oxo- and 7-hydroxy-neurosteroids such as 7-oxopregnenolone and 7beta-hydroxypregnenolone, 7-oxodehydroepiandrosterone (3beta-hydroxy-5-androstene-7,17-dione) and 7beta-hydroxydehydroepiandrosterone (3beta,7beta-dihydroxyandrost-5-en-17-one), among others. Catalyzes the stereo-specific conversion of the major dietary oxysterol, 7-ketocholesterol (7-oxocholesterol), into the more polar 7-beta-hydroxycholesterol metabolite. 7-oxocholesterol is one of the most important oxysterols, it participates in several events such as induction of apoptosis, accumulation in atherosclerotic lesions, lipid peroxidation, and induction of foam cell formation. Mediates the 7-oxo reduction of 7-oxolithocholate mainly to chenodeoxycholate, and to a lesser extent to ursodeoxycholate, both in its free form and when conjugated to glycine or taurine, providing a link between glucocorticoid activation and bile acid metabolism. Catalyzes the synthesis of 7-beta-25-dihydroxycholesterol from 7-oxo-25-hydroxycholesterol in vitro, which acts as a ligand for the G-protein-coupled receptor (GPCR) Epstein-Barr virus-induced gene 2 (EBI2) and may thereby regulate immune cell migration. The chain is 11-beta-hydroxysteroid dehydrogenase 1 from Bos taurus (Bovine).